The following is a 111-amino-acid chain: Nucleoid-associated protein Cpha266_1171 (111 aa).

This sequence belongs to the YbaB/EbfC family. In terms of assembly, homodimer.

Its subcellular location is the cytoplasm. It localises to the nucleoid. Functionally, binds to DNA and alters its conformation. May be involved in regulation of gene expression, nucleoid organization and DNA protection. The polypeptide is Nucleoid-associated protein Cpha266_1171 (Chlorobium phaeobacteroides (strain DSM 266 / SMG 266 / 2430)).